The sequence spans 135 residues: Small ribosomal subunit protein uS12 (135 aa).

The segment at 1–20 (MPTINQLVRKGRHSKVTKSK) is disordered. The segment covering 9-18 (RKGRHSKVTK) has biased composition (basic residues). Asp-102 is subject to 3-methylthioaspartic acid.

This sequence belongs to the universal ribosomal protein uS12 family. Part of the 30S ribosomal subunit. Contacts proteins S8 and S17. May interact with IF1 in the 30S initiation complex.

Functionally, with S4 and S5 plays an important role in translational accuracy. In terms of biological role, interacts with and stabilizes bases of the 16S rRNA that are involved in tRNA selection in the A site and with the mRNA backbone. Located at the interface of the 30S and 50S subunits, it traverses the body of the 30S subunit contacting proteins on the other side and probably holding the rRNA structure together. The combined cluster of proteins S8, S12 and S17 appears to hold together the shoulder and platform of the 30S subunit. The chain is Small ribosomal subunit protein uS12 from Lactobacillus helveticus (strain DPC 4571).